A 511-amino-acid polypeptide reads, in one-letter code: GMP synthase [glutamine-hydrolyzing] (511 aa).

In terms of domain architecture, Glutamine amidotransferase type-1 spans Leu5 to Asp195. The active-site Nucleophile is Cys82. Catalysis depends on residues His169 and Glu171. The 191-residue stretch at Trp196–Arg386 folds into the GMPS ATP-PPase domain. Ser223–Ser229 is an ATP binding site.

Homodimer.

The enzyme catalyses XMP + L-glutamine + ATP + H2O = GMP + L-glutamate + AMP + diphosphate + 2 H(+). It participates in purine metabolism; GMP biosynthesis; GMP from XMP (L-Gln route): step 1/1. Its function is as follows. Catalyzes the synthesis of GMP from XMP. The sequence is that of GMP synthase [glutamine-hydrolyzing] from Acetivibrio thermocellus (strain ATCC 27405 / DSM 1237 / JCM 9322 / NBRC 103400 / NCIMB 10682 / NRRL B-4536 / VPI 7372) (Clostridium thermocellum).